Reading from the N-terminus, the 101-residue chain is Chaperone modulatory protein CbpM (101 aa).

Belongs to the CbpM family.

Interacts with CbpA and inhibits both the DnaJ-like co-chaperone activity and the DNA binding activity of CbpA. Together with CbpA, modulates the activity of the DnaK chaperone system. Does not inhibit the co-chaperone activity of DnaJ. The protein is Chaperone modulatory protein CbpM of Escherichia coli O1:K1 / APEC.